Consider the following 119-residue polypeptide: Large ribosomal subunit protein bL20 (119 aa).

It belongs to the bacterial ribosomal protein bL20 family.

Its function is as follows. Binds directly to 23S ribosomal RNA and is necessary for the in vitro assembly process of the 50S ribosomal subunit. It is not involved in the protein synthesizing functions of that subunit. This chain is Large ribosomal subunit protein bL20, found in Clostridium botulinum (strain ATCC 19397 / Type A).